Consider the following 73-residue polypeptide: Translation initiation factor IF-1 (73 aa).

The S1-like domain occupies 1 to 73; the sequence is MAKKDGVIEL…ARGRIVYRYK (73 aa).

The protein belongs to the IF-1 family. In terms of assembly, component of the 30S ribosomal translation pre-initiation complex which assembles on the 30S ribosome in the order IF-2 and IF-3, IF-1 and N-formylmethionyl-tRNA(fMet); mRNA recruitment can occur at any time during PIC assembly.

It is found in the cytoplasm. One of the essential components for the initiation of protein synthesis. Stabilizes the binding of IF-2 and IF-3 on the 30S subunit to which N-formylmethionyl-tRNA(fMet) subsequently binds. Helps modulate mRNA selection, yielding the 30S pre-initiation complex (PIC). Upon addition of the 50S ribosomal subunit IF-1, IF-2 and IF-3 are released leaving the mature 70S translation initiation complex. The protein is Translation initiation factor IF-1 of Tropheryma whipplei (strain TW08/27) (Whipple's bacillus).